The sequence spans 451 residues: Cytochrome c biogenesis protein CcsB (451 aa).

The next 3 membrane-spanning stretches (helical) occupy residues 30 to 50, 89 to 109, and 175 to 195; these read LRLA…GTVI, TWWF…CTFT, and IGPI…IWGA.

The protein belongs to the Ccs1/CcsB family. May interact with CcsA.

Its subcellular location is the cellular thylakoid membrane. Required during biogenesis of c-type cytochromes (cytochrome c6 and cytochrome f) at the step of heme attachment. The chain is Cytochrome c biogenesis protein CcsB from Crocosphaera subtropica (strain ATCC 51142 / BH68) (Cyanothece sp. (strain ATCC 51142)).